Reading from the N-terminus, the 1164-residue chain is DNA-directed RNA polymerase 133 kDa polypeptide (1164 aa).

This sequence belongs to the RNA polymerase beta chain family. As to quaternary structure, the DNA-dependent RNA polymerase used for intermediate and late genes expression consists of eight subunits 147 kDa, 133 kDa, 35 kDa, 30 kDa, 22 kDa, 19 kDa, 18 kDa and 7 kDa totalling more than 500 kDa in mass. The same holoenzyme, with the addition of the transcription-specificity factor RAP94, is used for early gene expression.

The protein localises to the virion. It catalyses the reaction RNA(n) + a ribonucleoside 5'-triphosphate = RNA(n+1) + diphosphate. In terms of biological role, part of the DNA-dependent RNA polymerase which catalyzes the transcription of viral DNA into RNA using the four ribonucleoside triphosphates as substrates. Responsible for the transcription of early, intermediate and late genes. DNA-dependent RNA polymerase associates with the early transcription factor (ETF), itself composed of D6 and A7, thereby allowing the early genes transcription. Late transcription, and probably also intermediate transcription, require newly synthesized RNA polymerase. The polypeptide is DNA-directed RNA polymerase 133 kDa polypeptide (RPO132) (Homo sapiens (Human)).